We begin with the raw amino-acid sequence, 399 residues long: Long-chain primary alcohol dehydrogenase AdhA (399 aa).

This sequence belongs to the iron-containing alcohol dehydrogenase family. Homotetramer. Zn(2+) is required as a cofactor.

The catalysed reaction is a primary alcohol + NADP(+) = an aldehyde + NADPH + H(+). In terms of biological role, alcohol dehydrogenase active against primary long-chain alcohols. Pentan-1-ol is the optimum substrate in vitro, but also shows efficient dehydrogenase activity on propanol, hexanol, and ethanol. The polypeptide is Long-chain primary alcohol dehydrogenase AdhA (adhA) (Thermoanaerobacter ethanolicus (Clostridium thermohydrosulfuricum)).